A 348-amino-acid chain; its full sequence is Flavonol synthase/flavanone 3-hydroxylase (348 aa).

The Fe2OG dioxygenase domain occupies 209–309; that stretch reads EIVYLLKINY…RMSWPVFLEP (101 aa). Residues His-234, Asp-236, and His-290 each contribute to the Fe cation site.

It belongs to the iron/ascorbate-dependent oxidoreductase family. L-ascorbate is required as a cofactor. Requires Fe cation as cofactor.

It is found in the cytoplasm. The catalysed reaction is a (2R,3R)-dihydroflavonol + 2-oxoglutarate + O2 = a flavonol + succinate + CO2 + H2O. It carries out the reaction a (2S)-flavan-4-one + 2-oxoglutarate + O2 = a (2R,3R)-dihydroflavonol + succinate + CO2. It participates in secondary metabolite biosynthesis; flavonoid biosynthesis. Its function is as follows. Catalyzes the formation of flavonols from dihydroflavonols. It can act on dihydrokaempferol to produce kaempferol, on dihydroquercetin to produce quercitin and on dihydromyricetin to produce myricetin. This chain is Flavonol synthase/flavanone 3-hydroxylase (FL), found in Petunia hybrida (Petunia).